The following is a 180-amino-acid chain: Probable RNA 2'-phosphotransferase (180 aa).

The protein belongs to the KptA/TPT1 family.

In terms of biological role, removes the 2'-phosphate from RNA via an intermediate in which the phosphate is ADP-ribosylated by NAD followed by a presumed transesterification to release the RNA and generate ADP-ribose 1''-2''-cyclic phosphate (APPR&gt;P). May function as an ADP-ribosylase. The sequence is that of Probable RNA 2'-phosphotransferase from Thermococcus kodakarensis (strain ATCC BAA-918 / JCM 12380 / KOD1) (Pyrococcus kodakaraensis (strain KOD1)).